Consider the following 1330-residue polypeptide: MAEPRRVAFISLSPVRRREAEFPGTEREPEYPREPPRLEPQPYREPARTEPPAPREVAPRSDAQPPPREKPLPQREVSRAEPPMSLQREPPRPEPPPPPLPQLHLQPPPPRESTSRAEPQPRPPRETVRLELVLKDPTDESCVEFSYPELLLCGEQRKKPVYTEDPFNDDHQERQEVEMLAKKFEMKYGGKPRKHRRDRLQDLIDIGFGYDETDPFIDNSEAYDELVPASLTTKYGGFYINTGTLQFRQASDTEEDDTTDNQKHKPPKIPKIKEDDIEMKKRKRKEEGEKEKKPRKKVPKQLGVMALNSHKSEKKKKRYKDSLSLAAMIRKFQKEKDALKKESNPKTPLNFSTSSLNKPPSAAVALGNDVSDLNLTSADPDLPIFVSTNEHELFQEAENALEMLDDFDFDRLLDAASNGSPLSESGGENGNTTQPTYASQVMPKVVPTLPEGLPVLLEKRIEDLRVAAKLFDEEGRKKFFTQDMNNILLDIELQLQELGPVIRSGVYSHLEAFVPCNKETLVKRLKKLHLNVQDDRLREPLQKLKLAVSNVMPEQLFKYQEDCQARNQAKCAKFQTDEEREKNGSEEDDEEKPGKRVIGPRKKFHWDDTIRTLLCNLVEIKLGCYELEPNKSQSAEDYLKSFMETEVKPLWPKGWMQARMLFKESRSVHNHLTSAPAKKKVIPAPKPKVKECSPKKDQKTPASSVASVGGPSTSSSTSAVASTSSGSTPVQETICLDDSLDEELSFHPPALDLVSEALAVINNGNKGPPAGSRISMPTAKPRPGLREEKLASIMSKLPLATPKKLDSTQTAHSSSLIAGHTGPVPKKPQDLAHTGISSGLIAGSSIQNPKVSLEPLPARLLQQGLQRSSQIHASSSSQTHVSSSSQAQVAASSHTLGTSEAQDASPLTQVTKVHQHSAVQQNYVSPLQATISKSQTNPVVKLSNNPQLSCSSPLTKTSDKPLMYRLPLSTPPPGNGSQGSHSLVSRTVPSTTTSTNYLAKAMVSQISTQGFKSPFSMAASPKLASSPKPATSPKPLPSPKPSASPKPSQSAKPSVSTKLISKSNPTPKPTVSPSSSSPNALVAQSSHSSSNNPVHKQPSGMNISRQSPTLNLLPLNRTSGLPSTKNLQAPSKLTNSPSTGTVGKNSLSGIAMNVPASRGSNLNSSGANRTSLSGGTGSGTQGATKPLSTPHRPSSASGSSVVAASVQSTAGASLLANASPLTLMTSPLSVTNQNVTPFGMLGGLVPVTMPFQFPLELLGFGTDTAGVTTTSGSTSAAFHHSLTQNLLKGLQPGAQHAAALSHAPLPTHVQQTFNDGGQSKGDTKLPRKSQ.

Residues Met1–Val133 are disordered. Residue Ser13 is modified to Phosphoserine. Basic and acidic residues-rich tracts occupy residues Arg16–Arg37 and Pro67–Arg79. Residues Pro93 to Arg111 are compositionally biased toward pro residues. Over residues Pro123–Val133 the composition is skewed to basic and acidic residues. Residue Thr244 is modified to Phosphothreonine. Residues Gln249–Val304 form a disordered region. The residue at position 251 (Ser251) is a Phosphoserine. Residue Thr253 is modified to Phosphothreonine. Lys273 is covalently cross-linked (Glycyl lysine isopeptide (Lys-Gly) (interchain with G-Cter in SUMO2)). Residue Ser312 is modified to Phosphoserine. The tract at residues Lys336–Leu356 is disordered. Over residues Pro345–Leu356 the composition is skewed to polar residues. Phosphoserine is present on residues Ser417, Ser420, Ser423, and Ser585. Disordered regions lie at residues Phe574–Val597, Leu672–Val730, Pro802–His833, Gly864–Val913, Pro938–Val988, Met1017–Val1201, and His1308–Gln1330. Basic and acidic residues-rich tracts occupy residues Gln575–Ser585 and Lys688–Lys699. Positions Pro701–Val730 are enriched in low complexity. Over residues Ser807–Leu816 the composition is skewed to polar residues. Residues Gly864–Thr895 are compositionally biased toward low complexity. Composition is skewed to polar residues over residues Leu896 to Val913 and Pro938 to Lys956. Residues Met1017–Pro1029 are compositionally biased toward low complexity. The span at Ala1030–Ser1044 shows a compositional bias: pro residues. Composition is skewed to low complexity over residues Pro1045–Ser1054 and Ser1061–Asn1079. Lys1052 bears the N6-acetyllysine mark. Polar residues-rich tracts occupy residues Val1082–Ser1148, Arg1158–Arg1169, and His1308–Gly1317. Phosphoserine is present on Ser1107. An N6-acetyllysine modification is found at Lys1132. A compositionally biased stretch (basic and acidic residues) spans Gly1321–Gln1330.

The protein belongs to the ubinuclein family.

The protein is Ubinuclein-2 (UBN2) of Bos taurus (Bovine).